The chain runs to 204 residues: Guanylate kinase (204 aa).

Residues 18–196 (PKLFTISAPA…SYEVLKSIFI (179 aa)) enclose the Guanylate kinase-like domain. An ATP-binding site is contributed by 25–32 (APAGAGKT).

It belongs to the guanylate kinase family.

The protein resides in the cytoplasm. It catalyses the reaction GMP + ATP = GDP + ADP. In terms of biological role, essential for recycling GMP and indirectly, cGMP. The protein is Guanylate kinase of Chlamydia abortus (strain DSM 27085 / S26/3) (Chlamydophila abortus).